Here is a 659-residue protein sequence, read N- to C-terminus: MVLSTEENRSVDLVNLPSVPLPDGEAGVGENNKDSLNNLCSQYEEKVRPCIDLIDSLRALGVEQDLALPAIAVIGDQSSGKSSVLEALSGVALPRGSGIVTRCPLVLKLKKLNQGEEWKGKVTYDDIEVELSDPSEVEEAINTGQNHIAGVGLGISDKLISLDVSSPHVPDLTLIDLPGITRVAVGNQPADIGRQIKRLITNYIQKQETINLVVVPSNVDIATTEALSMAQKVDPDGDRTIGILTKPDLVDRGTEDKVVDVVRNLVCHLKKGYMIVKCRGQQDIQEQLSLAEALQKEQVFFKEHPQFRALLEDGKATVPCLAERLTMELISHICKSLPLLENQIKESHQSTSEELQKYGADIPEDENEKTLFLIEKINAFNQDITAIVEGEEIVREKECRLFTKLRKEFFLWSEEIERNFQKGSDALYKEVYTFEMQYRGRELPGFVNYKTFENIIRRQIKTLEEPAMEMLHKVTEIVRAAFTTVSEKNFSEFFNLHRTTKSKLEDIRLEQETEAEKSIRLHFQMEQIIYCQDQIYRKALQKVREEEAEEEERKHGKSRSSQSKNLQTSSMDEIFQHLNAYRQEAHNRISSHIPLIIQYFILKMFAEKLQKGMLQLLQDKDSCSWLLKEHSDTSEKRRFLKERLARLAQAQRRLAKFPG.

The Dynamin-type G domain maps to 65–338 (DLALPAIAVI…LISHICKSLP (274 aa)). The interval 75 to 82 (GDQSSGKS) is G1 motif. 75–82 (GDQSSGKS) provides a ligand contact to GTP. Residues 100–102 (VTR) form a G2 motif region. Positions 176-179 (DLPG) are G3 motif. GTP contacts are provided by residues 176 to 180 (DLPGI) and 245 to 248 (TKPD). A G4 motif region spans residues 245-248 (TKPD). Positions 277–280 (KCRG) are G5 motif. Residues 547–567 (EAEEEERKHGKSRSSQSKNLQ) form a disordered region. The GED domain maps to 571–659 (MDEIFQHLNA…AQRRLAKFPG (89 aa)).

The protein belongs to the TRAFAC class dynamin-like GTPase superfamily. Dynamin/Fzo/YdjA family.

The protein resides in the cytoplasm. In terms of biological role, interferon-induced dynamin-like GTPase with antiviral activity against vesicular stomatitis virus (VSV). This chain is Interferon-induced GTP-binding protein Mx2 (Mx2), found in Rattus norvegicus (Rat).